Reading from the N-terminus, the 432-residue chain is Non-peptidase homolog YmxG (432 aa).

Positions 1–20 (MKKFLITLLLGVFMGLQASA) are cleaved as a signal peptide.

The protein belongs to the peptidase M16 family.

Its subcellular location is the secreted. May contribute to the full activity of the protease PqqE. The sequence is that of Non-peptidase homolog YmxG from Helicobacter pylori (strain ATCC 700392 / 26695) (Campylobacter pylori).